Consider the following 361-residue polypeptide: MRRYLKKAKPKIVQTSDNEEEKHEENLNVSQSNKNANRRKTKAKEKNSGKFRVKYENEEGDDDGEDSQIPLIPKVKKQSSFHSVDDLISRRMDALSHESGYSNAYVDELKRKSRQTPSEFTKKEEDSSTKESELQTRSSPPLPVNTSLEWNMLNQGIPEEAMIKELKDREGRKRNIAMMTDNYISLETGDQLMLAQNHKEEKLLQTEDEIQDEGYSGFENYVEESEKLQEIYHHSSESLRTRSIQMAVDQKNMEMELDDEDIAEPIQSWEHTQIKKGAFGESPAFTNGLSVKLPNILTMDEQIQRLKEAIASEKLQQEERSQIIKSLMEEELEINEQEEKIKHSFIDLDKTLLNNLTKSKS.

Residues 1–10 (MRRYLKKAKP) are compositionally biased toward basic residues. Disordered regions lie at residues 1 to 82 (MRRY…SSFH) and 94 to 147 (ALSH…VNTS). 2 stretches are compositionally biased toward basic and acidic residues: residues 44–57 (KEKNSGKFRVKYEN) and 120–134 (FTKKEEDSSTKESEL). Over residues 135–147 (QTRSSPPLPVNTS) the composition is skewed to polar residues. Residues 295 to 349 (NILTMDEQIQRLKEAIASEKLQQEERSQIIKSLMEEELEINEQEEKIKHSFIDLD) are a coiled coil.

The protein localises to the cytoplasm. Its subcellular location is the nucleus. This is an uncharacterized protein from Schizosaccharomyces pombe (strain 972 / ATCC 24843) (Fission yeast).